The sequence spans 1244 residues: Actin cytoskeleton-regulatory complex protein SLA1 (1244 aa).

SH3 domains are found at residues 3–68 (VFLG…IEEA) and 69–132 (PVLK…PENG). Disordered stretches follow at residues 128–248 (EPEN…GNHE) and 415–497 (DKKH…PKKS). A compositionally biased stretch (low complexity) spans 140-159 (APAAAEAPAATPAAAPASAA). Over residues 171–184 (HNDRARMMQSKEDQ) the composition is skewed to basic and acidic residues. A compositionally biased stretch (low complexity) spans 199-214 (ARPTATTETTDATAAA). A compositionally biased stretch (acidic residues) spans 226 to 235 (NDNDDEEDDY). One can recognise an SH3 3 domain in the interval 353–415 (KSKKRGIVQY…PAQFIEPVRD (63 aa)). Basic residues predominate over residues 429–447 (SIKKNFTKSPSRSRSRSRS). S447, S449, and S454 each carry phosphoserine. Glycyl lysine isopeptide (Lys-Gly) (interchain with G-Cter in ubiquitin) cross-links involve residues K471 and K548. Positions 471 to 484 (KRSRKSSLSSHKKN) are enriched in basic residues. Disordered stretches follow at residues 558 to 592 (KANDGSSSRGTDSRDSERERRRRLKEQEEKERDRR), 610 to 649 (EERSRLQEKELPPIKPPRPTSTTSVPNTTSVPPAESSNNN), and 726 to 791 (PTNA…NLLS). Basic and acidic residues-rich tracts occupy residues 568 to 592 (TDSRDSERERRRRLKEQEEKERDRR) and 610 to 621 (EERSRLQEKELP). The span at 629 to 649 (TSTTSVPNTTSVPPAESSNNN) shows a compositional bias: low complexity. The segment covering 726–756 (PTNATGNMFSQPDGSLNVATSPETSLPQQLL) has biased composition (polar residues). Low complexity predominate over residues 757 to 771 (PQTTSPAQTAPSTSA). S799 carries the post-translational modification Phosphoserine. The disordered stretch occupies residues 813-853 (KAAASTPEPNLKDLEPVKTGGTTVPAAPVSSAPVSSAPAPL). At T831 the chain carries Phosphothreonine. Low complexity predominate over residues 836–851 (VPAAPVSSAPVSSAPA). Position 858 is a phosphothreonine (T858). 3 tandem repeats follow at residues 868-874 (TGFVMMP), 877-883 (TGGDMLP), and 887-893 (TGGFVVP). The segment at 868-1205 (TGFVMMPMIT…NTFNTGGAMQ (338 aa)) is 16 X 7 AA approximate repeats of T-G-G-A-M-M-P. Phosphothreonine occurs at positions 887 and 904. 2 tandem repeats follow at residues 923–929 (TGGAMMP) and 945–951 (TGGGLIP). T984 and T993 each carry phosphothreonine. S996 carries the phosphoserine modification. A run of 5 repeats spans residues 1003-1009 (TGGTMIP), 1020-1026 (TGGAMMT), 1031-1037 (TGSAMMP), 1048-1054 (TGGAMMP), and 1065-1071 (TGGAMMP). T1075 carries the post-translational modification Phosphothreonine. A run of 6 repeats spans residues 1084 to 1090 (TGGAMIP), 1129 to 1135 (TGGAMNT), 1155 to 1161 (TGGVMQE), 1170 to 1176 (TGGAMQQ), 1185 to 1191 (TDGIMQQ), and 1200 to 1206 (TGGAMQQ).

Belongs to the SLA1 family. As to quaternary structure, component of the PAN1 actin cytoskeleton-regulatory complex. Interacts with ABP1, KRE6, LAS17, LSB5, RSP5, RVS167, VPS1 and YSC84. Post-translationally, phosphorylated by PRK1.

Its subcellular location is the nucleus. The protein localises to the cell membrane. It is found in the endosome membrane. It localises to the cytoplasm. The protein resides in the cytoskeleton. Its subcellular location is the actin patch. Component of the PAN1 actin cytoskeleton-regulatory complex required for the internalization of endosomes during actin-coupled endocytosis. The complex links the site of endocytosis to the cell membrane-associated actin cytoskeleton. Mediates uptake of external molecules and vacuolar degradation of plasma membrane proteins. Plays a role in the proper organization of the cell membrane-associated actin cytoskeleton and promotes its destabilization. This Saccharomyces cerevisiae (strain ATCC 204508 / S288c) (Baker's yeast) protein is Actin cytoskeleton-regulatory complex protein SLA1 (SLA1).